Consider the following 327-residue polypeptide: Leucotoxin LukDv (327 aa).

The signal sequence occupies residues 1–26; it reads MKMKKLVKSSVASSIALLLLSNTVDA.

The protein belongs to the aerolysin family. As to quaternary structure, toxicity requires sequential binding and synergistic association of a class S and a class F component which form heterooligomeric complexes. LukEv (class S) associates with LukDv (class F).

The protein localises to the secreted. Part of a bi-component leucotoxin that acts by forming pores in the membrane of the target cells. The activity of LukEv-LukDv to rabbit leukocytes is similar to that of the Panton-Valentine leucocidin (PVL). LukEv-LukDv is hemolytic to rabbit red blood cells although the activity is only 8% of gamma-hemolysin. This is Leucotoxin LukDv (lukDv) from Staphylococcus aureus (strain NCTC 8325 / PS 47).